The chain runs to 450 residues: Phosphoglucosamine mutase (450 aa).

S102 (phosphoserine intermediate) is an active-site residue. Mg(2+) is bound by residues S102, D244, D246, and D248. S102 bears the Phosphoserine mark.

Belongs to the phosphohexose mutase family. Requires Mg(2+) as cofactor. In terms of processing, activated by phosphorylation.

It catalyses the reaction alpha-D-glucosamine 1-phosphate = D-glucosamine 6-phosphate. Its function is as follows. Catalyzes the conversion of glucosamine-6-phosphate to glucosamine-1-phosphate. In Syntrophomonas wolfei subsp. wolfei (strain DSM 2245B / Goettingen), this protein is Phosphoglucosamine mutase.